Reading from the N-terminus, the 1303-residue chain is Phosphoribosylformylglycinamidine synthase (1303 aa).

Residues 308 to 319 (GASTGSGGEIRD) and A679 contribute to the ATP site. Positions 719, 723, and 892 each coordinate Mg(2+). The interval 1003–1023 (LRDNPACADQEHEAKKDNSDP) is disordered. The span at 1011-1021 (DQEHEAKKDNS) shows a compositional bias: basic and acidic residues. Positions 1050 to 1303 (MAILREQGVN…MFQNARKNIG (254 aa)) constitute a Glutamine amidotransferase type-1 domain. Catalysis depends on C1143, which acts as the Nucleophile. Active-site residues include H1268 and E1270.

The protein in the N-terminal section; belongs to the FGAMS family. As to quaternary structure, monomer.

It localises to the cytoplasm. It catalyses the reaction N(2)-formyl-N(1)-(5-phospho-beta-D-ribosyl)glycinamide + L-glutamine + ATP + H2O = 2-formamido-N(1)-(5-O-phospho-beta-D-ribosyl)acetamidine + L-glutamate + ADP + phosphate + H(+). Its pathway is purine metabolism; IMP biosynthesis via de novo pathway; 5-amino-1-(5-phospho-D-ribosyl)imidazole from N(2)-formyl-N(1)-(5-phospho-D-ribosyl)glycinamide: step 1/2. Functionally, phosphoribosylformylglycinamidine synthase involved in the purines biosynthetic pathway. Catalyzes the ATP-dependent conversion of formylglycinamide ribonucleotide (FGAR) and glutamine to yield formylglycinamidine ribonucleotide (FGAM) and glutamate. This is Phosphoribosylformylglycinamidine synthase from Aliivibrio fischeri (strain ATCC 700601 / ES114) (Vibrio fischeri).